Consider the following 149-residue polypeptide: 3-dehydroquinate dehydratase (149 aa).

Residue tyrosine 22 is the Proton acceptor of the active site. Substrate contacts are provided by asparagine 74, histidine 80, and aspartate 87. Histidine 100 serves as the catalytic Proton donor. Residues 101-102 (LS) and arginine 111 each bind substrate.

The protein belongs to the type-II 3-dehydroquinase family. Homododecamer.

It carries out the reaction 3-dehydroquinate = 3-dehydroshikimate + H2O. Its pathway is metabolic intermediate biosynthesis; chorismate biosynthesis; chorismate from D-erythrose 4-phosphate and phosphoenolpyruvate: step 3/7. Catalyzes a trans-dehydration via an enolate intermediate. The sequence is that of 3-dehydroquinate dehydratase from Vesicomyosocius okutanii subsp. Calyptogena okutanii (strain HA).